The primary structure comprises 372 residues: uncharacterized protein (372 aa).

Basic residues-rich tracts occupy residues 1–11 (MNKILGLRRAK) and 38–48 (RLRRGMQRLSR). Residues 1-127 (MNKILGLRRA…NSGTRDTPCW (127 aa)) are disordered. The segment covering 50 to 61 (GYGDNRRSRGSE) has biased composition (basic and acidic residues). Polar residues predominate over residues 93–104 (GKTSPCGSSGTP).

This is an uncharacterized protein from Psittacid herpesvirus 1 (isolate Amazon parrot/-/97-0001/1997) (PsHV-1).